The following is a 429-amino-acid chain: Putative chloride channel protein ClcB-like (429 aa).

The next 11 helical transmembrane spans lie at 1-21, 44-64, 146-166, 168-188, 200-220, 221-241, 259-279, 283-303, 315-335, 354-376, and 383-405; these read MLAIAGLIGCAGALATIAFRE, LPWWARLLVPTAGGLLAGLTL, LLVACGAAAGITSAYNAPIAG, VFVCEIVFGAITTATLGPLLV, FFGYGAVYAMPHFDFVSGWEV, LTYLGLGLAAGMAGPLLLGLI, LALGGLIVGALSIRVPEVWGN, VVNGFLHAPWLWQTVALVLVC, GAVGGVFTPTLFCGAALGLLY, AVVGMGALLAATTHAPLMSILMI, and YQVVLPLMLACITGYVTAHATGA.

It belongs to the chloride channel (TC 2.A.49) family. ClcB subfamily.

Its subcellular location is the cell inner membrane. This is Putative chloride channel protein ClcB-like from Ralstonia nicotianae (strain ATCC BAA-1114 / GMI1000) (Ralstonia solanacearum).